A 154-amino-acid polypeptide reads, in one-letter code: Aspartate carbamoyltransferase regulatory chain (154 aa).

The Zn(2+) site is built by C109, C114, C138, and C141.

Belongs to the PyrI family. Contains catalytic and regulatory chains. Zn(2+) serves as cofactor.

Its function is as follows. Involved in allosteric regulation of aspartate carbamoyltransferase. The sequence is that of Aspartate carbamoyltransferase regulatory chain from Aliivibrio salmonicida (strain LFI1238) (Vibrio salmonicida (strain LFI1238)).